Consider the following 465-residue polypeptide: MKHIVKHIHFVGIGGAGMSGIAEVLVNLGYAVSGSDLSRNAVTDRLEALGARIAIGHDAANIEGANAVVVSTAVRSDNPEVLAARHQGVPIVQRAVMLAELMRLKQGIAIAGTHGKTTTTSLVASVLAAGGLDPTFVIGGRLISAGANARLGTGDFIVAEADESDASFLNLYPVIEVITNIDADHMDTYGHDFARLKQAFIEFTQRLPFYGSAVVCVDDPNVRQIIPFISKPVVRYGLSPDAQVRAEDIDARDGRMHFTVIREGRAPLAVVLNMPGLHNVQNALAAIAIATDLGVSDDAIQLALAEFNGVGRRFQRYGEVPSADGGQYTLIDDYGHHPVEMAATIAAARGAFPGRRLVLAFQPHRYTRTRDCFDDFVNVLSTVDALVLTEVYAAGEAAIPTASGDALSRALRAVGKVDPVFVATVDDVPDALAKVAQNGDVVITMGAGSIGGVPAKLVQHIQQKA.

Residue 112 to 118 (GTHGKTT) participates in ATP binding.

The protein belongs to the MurCDEF family.

It is found in the cytoplasm. The enzyme catalyses UDP-N-acetyl-alpha-D-muramate + L-alanine + ATP = UDP-N-acetyl-alpha-D-muramoyl-L-alanine + ADP + phosphate + H(+). Its pathway is cell wall biogenesis; peptidoglycan biosynthesis. In terms of biological role, cell wall formation. This is UDP-N-acetylmuramate--L-alanine ligase from Burkholderia cenocepacia (strain HI2424).